The following is a 184-amino-acid chain: MSVNDLRPGTTFLYDGNIYLVLEQAFSKTGRQQGKVTVKAKNMRTGARVELTFTGGEKVDKAMIERKEMQYLYNDGNDAYLMNTETYEQVSIPMTRLEWEKNFLVDGLMINMTEFENEVLGIDLPVKVELTVVEAEAAVKGDTTSGAQKKAILETGLEIMVPLFVNQGTKIIVSSADGKYVGRA.

It belongs to the elongation factor P family.

It is found in the cytoplasm. It functions in the pathway protein biosynthesis; polypeptide chain elongation. In terms of biological role, involved in peptide bond synthesis. Stimulates efficient translation and peptide-bond synthesis on native or reconstituted 70S ribosomes in vitro. Probably functions indirectly by altering the affinity of the ribosome for aminoacyl-tRNA, thus increasing their reactivity as acceptors for peptidyl transferase. This is Elongation factor P from Mycoplasma mycoides subsp. mycoides SC (strain CCUG 32753 / NCTC 10114 / PG1).